The following is a 386-amino-acid chain: Magnesium transporter MRS2-7 (386 aa).

The next 2 helical transmembrane spans lie at 321–341 and 355–375; these read LMLSAGTVCVSVYSMIAGIFG and IFKWVVSLTGTFCIVLFVIIL. The Required for magnesium transport activity signature appears at 341 to 343; sequence GMN.

Belongs to the CorA metal ion transporter (MIT) (TC 1.A.35.5) family. In terms of tissue distribution, isoform 1 is expressed in the whole plant. Isoform 4 is expressed only in roots and flowers.

Its subcellular location is the endoplasmic reticulum membrane. In terms of biological role, low-affinity magnesium transporter that mediates the influx of magnesium. In Arabidopsis thaliana (Mouse-ear cress), this protein is Magnesium transporter MRS2-7 (MRS2-7).